Reading from the N-terminus, the 369-residue chain is Geranylgeranyl pyrophosphate synthase, chloroplastic (369 aa).

Lys-118, Arg-121, and His-150 together coordinate isopentenyl diphosphate. Residues Asp-157 and Asp-163 each contribute to the Mg(2+) site. Arg-168 is a binding site for dimethylallyl diphosphate. Isopentenyl diphosphate is bound at residue Arg-169. The dimethylallyl diphosphate site is built by Lys-254, Thr-255, Gln-292, Lys-309, and Lys-319.

It belongs to the FPP/GGPP synthase family. Monomer. The cofactor is Mg(2+).

The protein localises to the plastid. It is found in the chloroplast. The catalysed reaction is isopentenyl diphosphate + dimethylallyl diphosphate = (2E)-geranyl diphosphate + diphosphate. It catalyses the reaction isopentenyl diphosphate + (2E)-geranyl diphosphate = (2E,6E)-farnesyl diphosphate + diphosphate. It carries out the reaction isopentenyl diphosphate + (2E,6E)-farnesyl diphosphate = (2E,6E,10E)-geranylgeranyl diphosphate + diphosphate. It functions in the pathway isoprenoid biosynthesis; farnesyl diphosphate biosynthesis; farnesyl diphosphate from geranyl diphosphate and isopentenyl diphosphate: step 1/1. It participates in isoprenoid biosynthesis; geranyl diphosphate biosynthesis; geranyl diphosphate from dimethylallyl diphosphate and isopentenyl diphosphate: step 1/1. The protein operates within isoprenoid biosynthesis; geranylgeranyl diphosphate biosynthesis; geranylgeranyl diphosphate from farnesyl diphosphate and isopentenyl diphosphate: step 1/1. In terms of biological role, catalyzes the trans-addition of the three molecules of IPP onto DMAPP to form geranylgeranyl pyrophosphate. The protein is Geranylgeranyl pyrophosphate synthase, chloroplastic of Capsicum annuum (Capsicum pepper).